A 410-amino-acid chain; its full sequence is LL-diaminopimelate aminotransferase (410 aa).

2 residues coordinate substrate: Y15 and G42. Pyridoxal 5'-phosphate contacts are provided by residues Y72, 108 to 109 (TK), Y132, N186, Y217, and 245 to 247 (SFS). The substrate site is built by K109, Y132, and N186. K248 carries the N6-(pyridoxal phosphate)lysine modification. The pyridoxal 5'-phosphate site is built by R256 and N291. Residues N291 and R387 each coordinate substrate.

Belongs to the class-I pyridoxal-phosphate-dependent aminotransferase family. LL-diaminopimelate aminotransferase subfamily. Homodimer. The cofactor is pyridoxal 5'-phosphate.

It carries out the reaction (2S,6S)-2,6-diaminopimelate + 2-oxoglutarate = (S)-2,3,4,5-tetrahydrodipicolinate + L-glutamate + H2O + H(+). It functions in the pathway amino-acid biosynthesis; L-lysine biosynthesis via DAP pathway; LL-2,6-diaminopimelate from (S)-tetrahydrodipicolinate (aminotransferase route): step 1/1. Its function is as follows. Involved in the synthesis of meso-diaminopimelate (m-DAP or DL-DAP), required for both lysine and peptidoglycan biosynthesis. Catalyzes the direct conversion of tetrahydrodipicolinate to LL-diaminopimelate. The chain is LL-diaminopimelate aminotransferase from Lawsonia intracellularis (strain PHE/MN1-00).